The chain runs to 830 residues: Lon protease (830 aa).

Residues 1 to 28 (MTFDTNDDSIAKNSLAPYNQETEQQQEE) form a disordered region. In terms of domain architecture, Lon N-terminal spans 50–245 (IPILPLRDVV…LVITHLTHEA (196 aa)). 397 to 404 (GPPGVGKT) contacts ATP. Residues 633–814 (TLPPGVALGL…DEVLPLAFSE (182 aa)) enclose the Lon proteolytic domain. Catalysis depends on residues Ser720 and Lys763.

It belongs to the peptidase S16 family. As to quaternary structure, homohexamer. Organized in a ring with a central cavity.

The protein resides in the cytoplasm. It carries out the reaction Hydrolysis of proteins in presence of ATP.. Its function is as follows. ATP-dependent serine protease that mediates the selective degradation of mutant and abnormal proteins as well as certain short-lived regulatory proteins. Required for cellular homeostasis and for survival from DNA damage and developmental changes induced by stress. Degrades polypeptides processively to yield small peptide fragments that are 5 to 10 amino acids long. Binds to DNA in a double-stranded, site-specific manner. In Lawsonia intracellularis (strain PHE/MN1-00), this protein is Lon protease.